We begin with the raw amino-acid sequence, 750 residues long: Methylmalonyl-CoA mutase, mitochondrial (750 aa).

Residues 1 to 32 constitute a mitochondrion transit peptide; the sequence is MLRAKNQLFLLSPHYLRQVKESSGSRLIQQRL. Glutamine 50 is a binding site for malonyl-CoA. The residue at position 89 (lysine 89) is an N6-acetyllysine. Malonyl-CoA-binding positions include 96–99 and 106–110; these read YPTM and TIRQY. Lysine 212 is modified (N6-acetyllysine). Malonyl-CoA-binding positions include 216–218, arginine 228, lysine 255, histidine 265, and 304–306; these read TIQ and RLS. At lysine 335 the chain carries N6-acetyllysine. Lysine 343 carries the N6-succinyllysine modification. The residue at position 481 (serine 481) is a Phosphoserine. Position 595 is an N6-succinyllysine (lysine 595). The residue at position 602 (lysine 602) is an N6-acetyllysine. The B12-binding domain occupies 614 to 746; the sequence is RPRLLVAKMG…DDIEKCLEKK (133 aa). Histidine 627 lines the adenosylcob(III)alamin pocket.

Belongs to the methylmalonyl-CoA mutase family. Homodimer. Interacts (the apoenzyme form) with MMAA; the interaction is GTP dependent. It depends on adenosylcob(III)alamin as a cofactor.

It is found in the mitochondrion matrix. Its subcellular location is the mitochondrion. The protein localises to the cytoplasm. The catalysed reaction is (R)-methylmalonyl-CoA = succinyl-CoA. With respect to regulation, during catalysis, accumulation of oxidized inactive cofactor hydroxocobalamin (OH2Cbl) leads to loss of MMUT activity. Interaction with MMAA decreases the rate of OH2Cbl formation and promotes the replacement of OH2Cbl by the active cofactor adenosylcobalamin (AdoCbl), thereby restoring MMUT activity. Inhibited by itaconyl-CoA, a metabolite that inactivates the coenzyme B12 cofactor. Inhibited at high concentration of substrate. Functionally, catalyzes the reversible isomerization of methylmalonyl-CoA (MMCoA) (generated from branched-chain amino acid metabolism and degradation of dietary odd chain fatty acids and cholesterol) to succinyl-CoA (3-carboxypropionyl-CoA), a key intermediate of the tricarboxylic acid cycle. In Homo sapiens (Human), this protein is Methylmalonyl-CoA mutase, mitochondrial.